A 214-amino-acid polypeptide reads, in one-letter code: Ribosomal RNA large subunit methyltransferase E (214 aa).

S-adenosyl-L-methionine-binding residues include G68, W70, D88, D104, and D129. K169 functions as the Proton acceptor in the catalytic mechanism.

This sequence belongs to the class I-like SAM-binding methyltransferase superfamily. RNA methyltransferase RlmE family.

Its subcellular location is the cytoplasm. The catalysed reaction is uridine(2552) in 23S rRNA + S-adenosyl-L-methionine = 2'-O-methyluridine(2552) in 23S rRNA + S-adenosyl-L-homocysteine + H(+). Functionally, specifically methylates the uridine in position 2552 of 23S rRNA at the 2'-O position of the ribose in the fully assembled 50S ribosomal subunit. The protein is Ribosomal RNA large subunit methyltransferase E of Magnetococcus marinus (strain ATCC BAA-1437 / JCM 17883 / MC-1).